A 420-amino-acid polypeptide reads, in one-letter code: Succinate--CoA ligase [GDP-forming] subunit beta, mitochondrial (420 aa).

Positions Lys-35–Phe-263 constitute an ATP-grasp domain. GTP contacts are provided by residues Gln-46, Gly-78–Gly-80, and Val-135. Positions 232 and 246 each coordinate Mg(2+). Residues Asn-297 and Gly-354–Met-356 each bind substrate.

This sequence belongs to the succinate/malate CoA ligase beta subunit family. GTP-specific subunit beta subfamily. Heterodimer of an alpha and a beta subunit. The beta subunit determines specificity for GTP. It depends on Mg(2+) as a cofactor.

It localises to the mitochondrion. It carries out the reaction GTP + succinate + CoA = succinyl-CoA + GDP + phosphate. It participates in carbohydrate metabolism; tricarboxylic acid cycle; succinate from succinyl-CoA (ligase route): step 1/1. GTP-specific succinyl-CoA synthetase functions in the citric acid cycle (TCA), coupling the hydrolysis of succinyl-CoA to the synthesis of GTP and thus represents the only step of substrate-level phosphorylation in the TCA. The beta subunit provides nucleotide specificity of the enzyme and binds the substrate succinate, while the binding sites for coenzyme A and phosphate are found in the alpha subunit. In Dictyostelium discoideum (Social amoeba), this protein is Succinate--CoA ligase [GDP-forming] subunit beta, mitochondrial (scsB).